The sequence spans 459 residues: Tryptophan synthase beta chain (459 aa).

At Lys121 the chain carries N6-(pyridoxal phosphate)lysine.

Belongs to the TrpB family. Tetramer of two alpha and two beta chains. Pyridoxal 5'-phosphate is required as a cofactor.

The enzyme catalyses (1S,2R)-1-C-(indol-3-yl)glycerol 3-phosphate + L-serine = D-glyceraldehyde 3-phosphate + L-tryptophan + H2O. The protein operates within amino-acid biosynthesis; L-tryptophan biosynthesis; L-tryptophan from chorismate: step 5/5. Its function is as follows. The beta subunit is responsible for the synthesis of L-tryptophan from indole and L-serine. The chain is Tryptophan synthase beta chain (trpB) from Pyrococcus horikoshii (strain ATCC 700860 / DSM 12428 / JCM 9974 / NBRC 100139 / OT-3).